The following is a 377-amino-acid chain: Trichodiene synthase (377 aa).

Belongs to the trichodiene synthase family.

The catalysed reaction is (2E,6E)-farnesyl diphosphate = trichodiene + diphosphate. It functions in the pathway sesquiterpene biosynthesis; trichothecene biosynthesis. In terms of biological role, TS is a member of the terpene cyclase group of enzymes. It catalyzes the isomerization and cyclization of farnesyl pyro-phosphate to form trichodiene, the first cyclic intermediate in the biosynthetic pathway for trichothecenes. It serves to branch trichothecene biosynthesis from the isoprenoid pathway. The sequence is that of Trichodiene synthase (TRI5) from Fusarium poae.